A 535-amino-acid chain; its full sequence is CTP synthase (535 aa).

The amidoligase domain stretch occupies residues 1 to 267 (MTKFIFVTGG…DDIVIKKLGL (267 aa)). Position 13 (Ser13) interacts with CTP. Residue Ser13 participates in UTP binding. ATP is bound at residue 14 to 19 (SLGKGI). Tyr54 is a binding site for L-glutamine. Position 71 (Asp71) interacts with ATP. Positions 71 and 141 each coordinate Mg(2+). Residues 148 to 150 (DIE), 188 to 193 (KTKPTQ), and Lys224 contribute to the CTP site. Residues 188-193 (KTKPTQ) and Lys224 contribute to the UTP site. Positions 292 to 534 (TIGIVGKYVS…IGASLKTNKL (243 aa)) constitute a Glutamine amidotransferase type-1 domain. Position 354 (Gly354) interacts with L-glutamine. The Nucleophile; for glutamine hydrolysis role is filled by Cys381. L-glutamine contacts are provided by residues 382 to 385 (LGMQ), Glu405, and Arg462. Residues His507 and Glu509 contribute to the active site.

Belongs to the CTP synthase family. In terms of assembly, homotetramer.

The enzyme catalyses UTP + L-glutamine + ATP + H2O = CTP + L-glutamate + ADP + phosphate + 2 H(+). It catalyses the reaction L-glutamine + H2O = L-glutamate + NH4(+). It carries out the reaction UTP + NH4(+) + ATP = CTP + ADP + phosphate + 2 H(+). Its pathway is pyrimidine metabolism; CTP biosynthesis via de novo pathway; CTP from UDP: step 2/2. With respect to regulation, allosterically activated by GTP, when glutamine is the substrate; GTP has no effect on the reaction when ammonia is the substrate. The allosteric effector GTP functions by stabilizing the protein conformation that binds the tetrahedral intermediate(s) formed during glutamine hydrolysis. Inhibited by the product CTP, via allosteric rather than competitive inhibition. Its function is as follows. Catalyzes the ATP-dependent amination of UTP to CTP with either L-glutamine or ammonia as the source of nitrogen. Regulates intracellular CTP levels through interactions with the four ribonucleotide triphosphates. The protein is CTP synthase of Carboxydothermus hydrogenoformans (strain ATCC BAA-161 / DSM 6008 / Z-2901).